The primary structure comprises 300 residues: ETS homologous factor (300 aa).

Positions 29 to 115 (STCNVSSGFF…SNLQHLKWNG (87 aa)) constitute a PNT domain. Positions 179-204 (LPIAESPDTKKEQDHPTKPHTKKHNP) are disordered. The segment covering 185–195 (PDTKKEQDHPT) has biased composition (basic and acidic residues). Positions 207–289 (THLWEFIRDI…DGRRLVYKFG (83 aa)) form a DNA-binding region, ETS.

It belongs to the ETS family.

It localises to the nucleus. Transcriptional activator that may play a role in regulating epithelial cell differentiation and proliferation. May act as a repressor for a specific subset of ETS/AP-1-responsive genes, and as a modulator of the nuclear response to mitogen-activated protein kinase signaling cascades. Binds to DNA sequences containing the consensus nucleotide core sequence GGAA. Involved in regulation of TNFRSF10B/DR5 expression through Ets-binding sequences on the TNFRSF10B/DR5 promoter. The chain is ETS homologous factor (EHF) from Bos taurus (Bovine).